Here is a 111-residue protein sequence, read N- to C-terminus: MINTVALFWALFIVCVVNMLRYYSSLRALLVVLRGCDPLLYQYVDGGGFFTSHGQPGKQLRLVRYIYERRYCDHHDGEFIRRCERLRRQFILTSALCGLVVVALIALMLWH.

The next 2 membrane-spanning stretches (helical) occupy residues 1-21 (MINT…NMLR) and 90-110 (FILT…LMLW).

It belongs to the universal stress protein B family.

The protein localises to the cell inner membrane. In Edwardsiella ictaluri (strain 93-146), this protein is Universal stress protein B.